The sequence spans 402 residues: Acetate kinase (402 aa).

N10 is a binding site for Mg(2+). K17 contributes to the ATP binding site. A substrate-binding site is contributed by R89. D148 serves as the catalytic Proton donor/acceptor. Residues 208-212, 283-285, and 334-338 contribute to the ATP site; these read HLGNG, DCR, and GIGEN. Position 389 (E389) interacts with Mg(2+).

The protein belongs to the acetokinase family. Homodimer. The cofactor is Mg(2+). Mn(2+) is required as a cofactor.

It is found in the cytoplasm. It catalyses the reaction acetate + ATP = acetyl phosphate + ADP. It functions in the pathway metabolic intermediate biosynthesis; acetyl-CoA biosynthesis; acetyl-CoA from acetate: step 1/2. Its function is as follows. Catalyzes the formation of acetyl phosphate from acetate and ATP. Can also catalyze the reverse reaction. This chain is Acetate kinase, found in Actinobacillus pleuropneumoniae serotype 5b (strain L20).